The sequence spans 85 residues: Neurotoxin beta-KTx 17 (85 aa).

Positions 1–20 are cleaved as a signal peptide; sequence MKQYIFFLALIVLVSTFAEA. The propeptide occupies 21–37; sequence GKKTEILDKVKKVFSKG. The BetaSPN-type CS-alpha/beta domain maps to 49–85; it reads ELGCPFIEKWCEDHCESKKQVGKCENFDCSCVKLGGK. 3 disulfide bridges follow: cysteine 52–cysteine 72, cysteine 59–cysteine 77, and cysteine 63–cysteine 79.

Belongs to the long chain scorpion toxin family. Class 2 subfamily. As to expression, expressed by the venom gland.

It is found in the secreted. Has a very weak effect to block voltage-gated potassium channel Kv1.1/KCNA1. This Lychas mucronatus (Chinese swimming scorpion) protein is Neurotoxin beta-KTx 17.